The following is a 363-amino-acid chain: Protein CPn_1058/CP_0792/CPj1058/CpB1100 (363 aa).

The signal sequence occupies residues Met-1–Ala-27.

It belongs to the chlamydial CPn_1058/CT_355/TC_0634 family.

The sequence is that of Protein CPn_1058/CP_0792/CPj1058/CpB1100 from Chlamydia pneumoniae (Chlamydophila pneumoniae).